The chain runs to 431 residues: Tyrosine--tRNA ligase (431 aa).

Position 33 (tyrosine 33) interacts with L-tyrosine. The short motif at 38–47 (PTADSLHIGS) is the 'HIGH' region element. Residues tyrosine 172 and glutamine 176 each coordinate L-tyrosine. The 'KMSKS' region motif lies at 234-238 (KFGKS). Lysine 237 serves as a coordination point for ATP. The 68-residue stretch at 364 to 431 (LDIVTVLNEK…KKNYFVIRVV (68 aa)) folds into the S4 RNA-binding domain.

The protein belongs to the class-I aminoacyl-tRNA synthetase family. TyrS type 1 subfamily. In terms of assembly, homodimer.

It localises to the cytoplasm. The enzyme catalyses tRNA(Tyr) + L-tyrosine + ATP = L-tyrosyl-tRNA(Tyr) + AMP + diphosphate + H(+). Its function is as follows. Catalyzes the attachment of tyrosine to tRNA(Tyr) in a two-step reaction: tyrosine is first activated by ATP to form Tyr-AMP and then transferred to the acceptor end of tRNA(Tyr). In Flavobacterium johnsoniae (strain ATCC 17061 / DSM 2064 / JCM 8514 / BCRC 14874 / CCUG 350202 / NBRC 14942 / NCIMB 11054 / UW101) (Cytophaga johnsonae), this protein is Tyrosine--tRNA ligase.